The chain runs to 884 residues: Blastomere cadherin (884 aa).

A signal peptide spans 1 to 26; that stretch reads MGGTDKFRYPSVWLCGLLCLLQVVPS. A propeptide spanning residues 27 to 157 is cleaved from the precursor; that stretch reads INVDVSGCQP…KHTGLKRKKR (131 aa). Cadherin domains lie at 158-265, 266-378, 379-489, 490-595, and 596-706; these read DWVI…RPKF, TQPV…APIF, DPKT…APVF, VPVV…DNGP, and VPSP…GFDL. Over 158–706 the chain is Extracellular; the sequence is DWVIPPIKVS…QEKLVAGFDL (549 aa). N-linked (GlcNAc...) asparagine glycosylation is found at N427, N560, and N683. A helical membrane pass occupies residues 707-730; the sequence is PIILVILGSILALLILSLLLLLFL. The Cytoplasmic portion of the chain corresponds to 731–884; sequence KRKKVVKEPL…YGGDDDDDEE (154 aa).

As to expression, expressed in pituitary gland, lung and kidney.

It is found in the cell membrane. Cadherins are calcium-dependent cell adhesion proteins. They preferentially interact with themselves in a homophilic manner in connecting cells; cadherins may thus contribute to the sorting of heterogeneous cell types. The polypeptide is Blastomere cadherin (Xenopus laevis (African clawed frog)).